The chain runs to 275 residues: Large ribosomal subunit protein uL2 (275 aa).

The disordered stretch occupies residues 221–275 (VRGVAMNPVDHPMGGGEGKSSGGRHPCSPWGQQSKGVRTRNNKRTDQFIVKRRSK).

The protein belongs to the universal ribosomal protein uL2 family. In terms of assembly, part of the 50S ribosomal subunit. Forms a bridge to the 30S subunit in the 70S ribosome.

In terms of biological role, one of the primary rRNA binding proteins. Required for association of the 30S and 50S subunits to form the 70S ribosome, for tRNA binding and peptide bond formation. It has been suggested to have peptidyltransferase activity; this is somewhat controversial. Makes several contacts with the 16S rRNA in the 70S ribosome. This Desulfosudis oleivorans (strain DSM 6200 / JCM 39069 / Hxd3) (Desulfococcus oleovorans) protein is Large ribosomal subunit protein uL2.